A 1104-amino-acid polypeptide reads, in one-letter code: Extended synaptotagmin-1 (1104 aa).

Residue Met-1 is modified to N-acetylmethionine. Topologically, residues 1-38 are cytoplasmic; it reads MERSPGEGPSPSPTDQPSAPSDPTGQPPAAHAKPDPGS. Residues 1-47 are disordered; the sequence is MERSPGEGPSPSPTDQPSAPSDPTGQPPAAHAKPDPGSGGQPAGPGA. Polar residues predominate over residues 15-24; that stretch reads DQPSAPSDPT. The segment covering 37–47 has biased composition (gly residues); the sequence is GSGGQPAGPGA. The helical transmembrane segment at 39-59 threads the bilayer; the sequence is GGQPAGPGAAGEALAVLTSFG. Topologically, residues 60-62 are lumenal; sequence KRL. A helical membrane pass occupies residues 63–83; that stretch reads LVLIPVYLAGAVGLSVGFVLF. At 84–1104 the chain is on the cytoplasmic side; the sequence is GLALYLGWRR…LMDDKDKGSS (1021 aa). The stretch at 91–116 forms a coiled coil; the sequence is WRRVRDEKERSLRAARQLLDDEEQLT. One can recognise an SMP-LTD domain in the interval 135 to 313; that stretch reads DVEKAEWLNK…LPNRLLVPLV (179 aa). 4 consecutive C2 domains span residues 312–433, 460–580, 627–751, and 777–899; these read LVPD…DDWF, QVLQ…QLSS, SVDA…DEWL, and LEEV…TLNS. At Ser-324 the chain carries Phosphoserine; by CDK5. Ca(2+) is bound by residues Lys-344, Asp-345, Asp-357, Asp-404, Asp-406, Asp-408, Asp-410, and Asp-411. Disordered regions lie at residues 617 to 641, 813 to 833, and 924 to 950; these read VDSE…TPDS, RKGT…TSHK, and SHSY…VTSS. The residue at position 817 (Lys-817) is an N6-acetyllysine. Phosphoserine occurs at positions 820 and 941. A compositionally biased stretch (low complexity) spans 925–946; the sequence is HSYSHSSSSLSEEPELSGGPPH. The residue at position 948 (Thr-948) is a Phosphothreonine. 2 positions are modified to phosphoserine: Ser-949 and Ser-963. In terms of domain architecture, C2 5 spans 971–1093; that stretch reads PLGQVKLTVW…DLSQGVARWY (123 aa). Position 1009 is a phosphotyrosine (Tyr-1009). The required for phosphatidylinositol 4,5-bisphosphate-dependent location at the cell membrane stretch occupies residues 1018-1025; it reads KNRGTKRK. A Phosphoserine modification is found at Ser-1034.

Belongs to the extended synaptotagmin family. Interacts with ESYT2 and ESYT3. Interacts with ADGRD1; inhibiting the G-protein-coupled receptor activity of ADGRD1. Interaction with ADGRD1 is abolished when cytosolic calcium increases, relieving ADGRD1 G-protein-coupled receptor activity. Interacts (phosphorylated form) with SLC2A4. In terms of processing, phosphorylated on Ser residues in insulin-treated adipocytes (in vitro); this promotes interaction with SLC2A4.

It is found in the endoplasmic reticulum membrane. It localises to the cell membrane. Its function is as follows. Binds calcium (via the C2 domains) and translocates to sites of contact between the endoplasmic reticulum and the cell membrane in response to increased cytosolic calcium levels. Helps tether the endoplasmic reticulum to the cell membrane and promotes the formation of appositions between the endoplasmic reticulum and the cell membrane. Acts as an inhibitor of ADGRD1 G-protein-coupled receptor activity in absence of cytosolic calcium. Binds glycerophospholipids in a barrel-like domain and may play a role in cellular lipid transport. This is Extended synaptotagmin-1 (ESYT1) from Pongo abelii (Sumatran orangutan).